The following is a 296-amino-acid chain: Solute carrier protein FPSE_08119 (296 aa).

The next 3 membrane-spanning stretches (helical) occupy residues 12-32 (GLAA…GMVA), 122-142 (AGVG…VILI), and 219-239 (AVAA…FDFV). Solcar repeat units follow at residues 16–102 (LQTA…FEKE), 114–205 (LSFG…AKNQ), and 213–296 (SPPV…GPHS).

The protein belongs to the mitochondrial carrier (TC 2.A.29) family.

It localises to the mitochondrion inner membrane. Its function is as follows. Solute carrier protein; part of the Fusarium detoxification of benzoxazolinone cluster involved in the degradation of benzoxazolinones produced by the host plant. Maize, wheat, and rye produce the 2 benzoxazinone phytoanticipins 2,4-dihy-droxy-7-methoxy-1,4-benzoxazin-3-one (DIMBOA) and 2,4-dihydroxy-1,4-benzoxazin-3-one (DIBOA) that, due to their inherent instability once released, spontaneously degrade to the more stable corresponding benzoxazolinones, 6-methoxy-2-benzoxazolinone (MBOA) and 2-benzoxazolinone (BOA), respectively. The chain is Solute carrier protein FPSE_08119 from Fusarium pseudograminearum (strain CS3096) (Wheat and barley crown-rot fungus).